The sequence spans 98 residues: NADH-ubiquinone oxidoreductase chain 4L (98 aa).

The next 3 helical transmembrane spans lie at 1-21 (MSPI…GLLI), 30-50 (LLCL…LALT), and 61-81 (IILL…LVMV).

The protein belongs to the complex I subunit 4L family. As to quaternary structure, core subunit of respiratory chain NADH dehydrogenase (Complex I) which is composed of 45 different subunits.

The protein localises to the mitochondrion inner membrane. It catalyses the reaction a ubiquinone + NADH + 5 H(+)(in) = a ubiquinol + NAD(+) + 4 H(+)(out). In terms of biological role, core subunit of the mitochondrial membrane respiratory chain NADH dehydrogenase (Complex I) which catalyzes electron transfer from NADH through the respiratory chain, using ubiquinone as an electron acceptor. Part of the enzyme membrane arm which is embedded in the lipid bilayer and involved in proton translocation. The protein is NADH-ubiquinone oxidoreductase chain 4L (MT-ND4L) of Chrysochloris asiatica (Cape golden mole).